The sequence spans 210 residues: 7-methyl-GTP pyrophosphatase (210 aa).

D79 serves as the catalytic Proton acceptor.

The protein belongs to the Maf family. YceF subfamily. It depends on a divalent metal cation as a cofactor.

Its subcellular location is the cytoplasm. It carries out the reaction N(7)-methyl-GTP + H2O = N(7)-methyl-GMP + diphosphate + H(+). Its function is as follows. Nucleoside triphosphate pyrophosphatase that hydrolyzes 7-methyl-GTP (m(7)GTP). May have a dual role in cell division arrest and in preventing the incorporation of modified nucleotides into cellular nucleic acids. The chain is 7-methyl-GTP pyrophosphatase from Burkholderia orbicola (strain AU 1054).